The sequence spans 616 residues: Chaperone protein HscA (616 aa).

This sequence belongs to the heat shock protein 70 family.

Functionally, chaperone involved in the maturation of iron-sulfur cluster-containing proteins. Has a low intrinsic ATPase activity which is markedly stimulated by HscB. Involved in the maturation of IscU. The protein is Chaperone protein HscA of Salmonella agona (strain SL483).